The primary structure comprises 202 residues: Kunitz trypsin inhibitor 7 (202 aa).

An N-terminal signal peptide occupies residues 1–25; it reads MKTFRSMLISLLLVAITTTSGVVEG. The cysteines at positions 69 and 115 are disulfide-linked. N-linked (GlcNAc...) asparagine glycosylation is found at Asn-93, Asn-136, Asn-144, and Asn-198.

The protein belongs to the protease inhibitor I3 (leguminous Kunitz-type inhibitor) family.

Exhibits Kunitz trypsin protease inhibitor activity. The sequence is that of Kunitz trypsin inhibitor 7 from Arabidopsis thaliana (Mouse-ear cress).